We begin with the raw amino-acid sequence, 460 residues long: UDP-glycosyltransferase 74B1 (460 aa).

Catalysis depends on His-22, which acts as the Proton acceptor. His-22 lines the an anthocyanidin pocket. Catalysis depends on Asp-113, which acts as the Charge relay. Residues Thr-135, Gln-339, His-354, Trp-357, Asn-358, Ser-359, Glu-362, Asp-378, and Gln-379 each contribute to the UDP-alpha-D-glucose site.

The protein belongs to the UDP-glycosyltransferase family. As to expression, expressed in the vasculature, the apical meristems of roots, shoots and inflorescence, and the junction of organ or branches.

It carries out the reaction (Z)-2-phenyl-1-thioacetohydroximate + UDP-alpha-D-glucose = (Z)-desulfoglucotropeolin + UDP. It catalyses the reaction a (Z)-omega-(methylsulfanyl)alkyl-thiohydroximate + UDP-alpha-D-glucose = an aliphatic (Z)-desulfo-glucosinolate + UDP. The enzyme catalyses (Z)-2-(indol-3-yl)-1-thioacetohydroximate + UDP-alpha-D-glucose = (Z)-indolylmethyl desulfoglucosinolate + UDP. Involved in the biosynthesis of glucosinolate. In in vitro assay, may use phenylacetothiohydroximate (PATH), but not phenylacetic acid (PAA), indole-3-acetic acid (IAA) or salicylic acid (SA) as substrate. Specific for the thiohydroximate functional group and does not glucosylate the carboxylate group or a hydroxyl group. This Arabidopsis thaliana (Mouse-ear cress) protein is UDP-glycosyltransferase 74B1 (UGT74B1).